Consider the following 518-residue polypeptide: Chromosomal replication initiator protein DnaA (518 aa).

The interval 1 to 72 (MTLAEFWPLC…VREELAAGRS (72 aa)) is domain I, interacts with DnaA modulators. The tract at residues 72–180 (SAFVFKPGEG…DAEEARYEQT (109 aa)) is domain II. The disordered stretch occupies residues 145-172 (EPRQAAGSASRPESVAVAKARTDVQRDA). The segment at 181–397 (NLSPDYTFDT…GAFNRVGASS (217 aa)) is domain III, AAA+ region. ATP is bound by residues Gly225, Gly227, Lys228, and Thr229. Residues 398 to 518 (RFMNRPVIDI…YEKLLILIQN (121 aa)) are domain IV, binds dsDNA.

Belongs to the DnaA family. As to quaternary structure, oligomerizes as a right-handed, spiral filament on DNA at oriC.

The protein localises to the cytoplasm. In terms of biological role, plays an essential role in the initiation and regulation of chromosomal replication. ATP-DnaA binds to the origin of replication (oriC) to initiate formation of the DNA replication initiation complex once per cell cycle. Binds the DnaA box (a 9 base pair repeat at the origin) and separates the double-stranded (ds)DNA. Forms a right-handed helical filament on oriC DNA; dsDNA binds to the exterior of the filament while single-stranded (ss)DNA is stabiized in the filament's interior. The ATP-DnaA-oriC complex binds and stabilizes one strand of the AT-rich DNA unwinding element (DUE), permitting loading of DNA polymerase. After initiation quickly degrades to an ADP-DnaA complex that is not apt for DNA replication. Binds acidic phospholipids. This chain is Chromosomal replication initiator protein DnaA, found in Neisseria meningitidis serogroup B (strain ATCC BAA-335 / MC58).